The sequence spans 269 residues: Hemin import ATP-binding protein HmuV (269 aa).

The ABC transporter domain maps to 5–242 (IETHSVTMRI…GLIRKVFEVC (238 aa)). Residue 37–44 (GPNGAGKS) participates in ATP binding.

This sequence belongs to the ABC transporter superfamily. Heme (hemin) importer (TC 3.A.1.14.5) family. As to quaternary structure, the complex is composed of two ATP-binding proteins (HmuV), two transmembrane proteins (HmuU) and a solute-binding protein (HmuT).

Its subcellular location is the cell inner membrane. In terms of biological role, part of the ABC transporter complex HmuTUV involved in hemin import. Responsible for energy coupling to the transport system. The protein is Hemin import ATP-binding protein HmuV of Nitrobacter winogradskyi (strain ATCC 25391 / DSM 10237 / CIP 104748 / NCIMB 11846 / Nb-255).